The primary structure comprises 235 residues: Aspartate/glutamate leucyltransferase (235 aa).

The protein belongs to the R-transferase family. Bpt subfamily.

It localises to the cytoplasm. The enzyme catalyses N-terminal L-glutamyl-[protein] + L-leucyl-tRNA(Leu) = N-terminal L-leucyl-L-glutamyl-[protein] + tRNA(Leu) + H(+). The catalysed reaction is N-terminal L-aspartyl-[protein] + L-leucyl-tRNA(Leu) = N-terminal L-leucyl-L-aspartyl-[protein] + tRNA(Leu) + H(+). Functions in the N-end rule pathway of protein degradation where it conjugates Leu from its aminoacyl-tRNA to the N-termini of proteins containing an N-terminal aspartate or glutamate. This is Aspartate/glutamate leucyltransferase from Pseudomonas paraeruginosa (strain DSM 24068 / PA7) (Pseudomonas aeruginosa (strain PA7)).